Consider the following 202-residue polypeptide: NADH-quinone oxidoreductase subunit C (202 aa).

The protein belongs to the complex I 30 kDa subunit family. As to quaternary structure, NDH-1 is composed of 14 different subunits. Subunits NuoB, C, D, E, F, and G constitute the peripheral sector of the complex.

The protein localises to the cell inner membrane. It catalyses the reaction a quinone + NADH + 5 H(+)(in) = a quinol + NAD(+) + 4 H(+)(out). Its function is as follows. NDH-1 shuttles electrons from NADH, via FMN and iron-sulfur (Fe-S) centers, to quinones in the respiratory chain. The immediate electron acceptor for the enzyme in this species is believed to be ubiquinone. Couples the redox reaction to proton translocation (for every two electrons transferred, four hydrogen ions are translocated across the cytoplasmic membrane), and thus conserves the redox energy in a proton gradient. This chain is NADH-quinone oxidoreductase subunit C, found in Paracidovorax citrulli (strain AAC00-1) (Acidovorax citrulli).